We begin with the raw amino-acid sequence, 743 residues long: Phosphoribosylformylglycinamidine synthase subunit PurL (743 aa).

H50 is an active-site residue. Positions 53 and 92 each coordinate ATP. E94 provides a ligand contact to Mg(2+). Substrate contacts are provided by residues 95–98 and R117; that span reads SHNH. Residue H96 is the Proton acceptor of the active site. D118 contacts Mg(2+). Q241 is a substrate binding site. D269 contributes to the Mg(2+) binding site. 313–315 is a substrate binding site; the sequence is ESQ. ATP contacts are provided by D494 and G531. Position 532 (N532) interacts with Mg(2+). S534 is a substrate binding site.

This sequence belongs to the FGAMS family. As to quaternary structure, monomer. Part of the FGAM synthase complex composed of 1 PurL, 1 PurQ and 2 PurS subunits.

The protein resides in the cytoplasm. It catalyses the reaction N(2)-formyl-N(1)-(5-phospho-beta-D-ribosyl)glycinamide + L-glutamine + ATP + H2O = 2-formamido-N(1)-(5-O-phospho-beta-D-ribosyl)acetamidine + L-glutamate + ADP + phosphate + H(+). Its pathway is purine metabolism; IMP biosynthesis via de novo pathway; 5-amino-1-(5-phospho-D-ribosyl)imidazole from N(2)-formyl-N(1)-(5-phospho-D-ribosyl)glycinamide: step 1/2. Functionally, part of the phosphoribosylformylglycinamidine synthase complex involved in the purines biosynthetic pathway. Catalyzes the ATP-dependent conversion of formylglycinamide ribonucleotide (FGAR) and glutamine to yield formylglycinamidine ribonucleotide (FGAM) and glutamate. The FGAM synthase complex is composed of three subunits. PurQ produces an ammonia molecule by converting glutamine to glutamate. PurL transfers the ammonia molecule to FGAR to form FGAM in an ATP-dependent manner. PurS interacts with PurQ and PurL and is thought to assist in the transfer of the ammonia molecule from PurQ to PurL. The protein is Phosphoribosylformylglycinamidine synthase subunit PurL of Rhizobium meliloti (strain 1021) (Ensifer meliloti).